Consider the following 356-residue polypeptide: UDP-N-acetylglucosamine--N-acetylmuramyl-(pentapeptide) pyrophosphoryl-undecaprenol N-acetylglucosamine transferase (356 aa).

UDP-N-acetyl-alpha-D-glucosamine is bound by residues 12–14 (TAG), R166, S196, and Q291.

Belongs to the glycosyltransferase 28 family. MurG subfamily.

It localises to the cell membrane. It catalyses the reaction di-trans,octa-cis-undecaprenyl diphospho-N-acetyl-alpha-D-muramoyl-L-alanyl-D-glutamyl-meso-2,6-diaminopimeloyl-D-alanyl-D-alanine + UDP-N-acetyl-alpha-D-glucosamine = di-trans,octa-cis-undecaprenyl diphospho-[N-acetyl-alpha-D-glucosaminyl-(1-&gt;4)]-N-acetyl-alpha-D-muramoyl-L-alanyl-D-glutamyl-meso-2,6-diaminopimeloyl-D-alanyl-D-alanine + UDP + H(+). Its pathway is cell wall biogenesis; peptidoglycan biosynthesis. Functionally, cell wall formation. Catalyzes the transfer of a GlcNAc subunit on undecaprenyl-pyrophosphoryl-MurNAc-pentapeptide (lipid intermediate I) to form undecaprenyl-pyrophosphoryl-MurNAc-(pentapeptide)GlcNAc (lipid intermediate II). The protein is UDP-N-acetylglucosamine--N-acetylmuramyl-(pentapeptide) pyrophosphoryl-undecaprenol N-acetylglucosamine transferase of Geobacillus thermodenitrificans (strain NG80-2).